Reading from the N-terminus, the 125-residue chain is Cu-Zn superoxide dismutase-like protein OPG175 (125 aa).

A disulfide bridge links cysteine 52 with cysteine 102.

The protein belongs to the Cu-Zn superoxide dismutase family.

It localises to the virion. The protein localises to the host cytoplasm. Superoxide dismutase-like protein with no enzymatic activity. This is Cu-Zn superoxide dismutase-like protein OPG175 (OPG175) from Homo sapiens (Human).